We begin with the raw amino-acid sequence, 98 residues long: NADH-ubiquinone oxidoreductase chain 4L (98 aa).

3 helical membrane passes run 1-21 (MSIV…GMLI), 29-49 (SLLC…LIIL), and 61-81 (IILL…LVMV).

This sequence belongs to the complex I subunit 4L family. Core subunit of respiratory chain NADH dehydrogenase (Complex I) which is composed of 45 different subunits.

The protein resides in the mitochondrion inner membrane. It catalyses the reaction a ubiquinone + NADH + 5 H(+)(in) = a ubiquinol + NAD(+) + 4 H(+)(out). Functionally, core subunit of the mitochondrial membrane respiratory chain NADH dehydrogenase (Complex I) which catalyzes electron transfer from NADH through the respiratory chain, using ubiquinone as an electron acceptor. Part of the enzyme membrane arm which is embedded in the lipid bilayer and involved in proton translocation. In Herpestes javanicus (Small Indian mongoose), this protein is NADH-ubiquinone oxidoreductase chain 4L (MT-ND4L).